The chain runs to 358 residues: Protein Wnt-8b (358 aa).

A signal peptide spans 1-23 (MFMHLEVYYYAFILMAHMKTCCG). A disulfide bridge connects residues Cys-55 and Cys-66. Asn-104 carries an N-linked (GlcNAc...) asparagine glycan. Intrachain disulfides connect Cys-105-Cys-113, Cys-115-Cys-133, Cys-181-Cys-195, Cys-183-Cys-190, Cys-257-Cys-295, Cys-273-Cys-288, Cys-292-Cys-334, Cys-310-Cys-325, Cys-312-Cys-322, and Cys-317-Cys-318. Ser-187 carries the O-palmitoleoyl serine lipid modification. N-linked (GlcNAc...) asparagine glycosylation is found at Asn-260 and Asn-279. An N-linked (GlcNAc...) asparagine glycan is attached at Asn-345.

The protein belongs to the Wnt family. Palmitoleoylation is required for efficient binding to frizzled receptors. Depalmitoleoylation leads to Wnt signaling pathway inhibition. Post-translationally, proteolytic processing by tiki1 and tiki2 promotes oxidation and formation of large disulfide-bond oligomers, leading to inactivation of wnt8b. In terms of tissue distribution, hindbrain r1, 2 and 5.

Its subcellular location is the secreted. The protein localises to the extracellular space. It is found in the extracellular matrix. In terms of biological role, ligand for fzd8a, a member of the G-protein coupled frizzled receptor family. May play a role in the establishment of polarity in the nervous system. Involved in canonical Wnt signaling pathway. During embryonic development, required for the acquisition of caudal diencephalic fate. Antagonizes eye specification. This Danio rerio (Zebrafish) protein is Protein Wnt-8b (wnt8b).